The sequence spans 438 residues: UPF0229 protein NGR_c12350 (438 aa).

Residues Met1–Leu16 are compositionally biased toward basic and acidic residues. Disordered stretches follow at residues Met1 to Gln20 and Phe83 to Gln107. Residues Ser94 to Thr105 are compositionally biased toward gly residues.

It belongs to the UPF0229 family.

In Sinorhizobium fredii (strain NBRC 101917 / NGR234), this protein is UPF0229 protein NGR_c12350.